Here is a 171-residue protein sequence, read N- to C-terminus: Envelope glycoprotein N (171 aa).

The Virion surface segment spans residues 1–132 (MARINSNSGT…CSALKYRIYV (132 aa)). Residues 133-153 (SSFVSVLNIILYVLLFLASVV) form a helical membrane-spanning segment. Residues 154-171 (YIRYLCHQSITTETVKDY) lie on the Intravirion side of the membrane.

This sequence belongs to the herpesviridae glycoprotein N family. As to quaternary structure, interacts (via N-terminus) with gM (via N-terminus). The gM-gN heterodimer forms the gCII complex.

The protein localises to the virion membrane. The protein resides in the host membrane. It is found in the host Golgi apparatus. It localises to the host trans-Golgi network. Envelope glycoprotein necessary for proper maturation of gM and modulation of its membrane fusion activity. Also plays a critical role in virion morphogenesis. The chain is Envelope glycoprotein N from Elephas maximus (Indian elephant).